Here is a 248-residue protein sequence, read N- to C-terminus: Probable transcriptional regulatory protein Syncc9902_0542 (248 aa).

This sequence belongs to the TACO1 family.

It localises to the cytoplasm. In Synechococcus sp. (strain CC9902), this protein is Probable transcriptional regulatory protein Syncc9902_0542.